Here is a 189-residue protein sequence, read N- to C-terminus: MFGVGIFEVLVILIVAVIALGPNKLPQTIVDIVKFFRAVKKTMAEAKETFDKEIQLSEIKQEALKYKDTLESEVNKLTKDIRLDELREISVDSLTKPLQETKEVLSEEAKNLQSTLESLNSDISYESSAAAQTPTTQESIPTDSTREIAYATQKPQNSIDSINSKESSVDSLHSPSIVESTQSSSSKDS.

The helical transmembrane segment at 1–21 (MFGVGIFEVLVILIVAVIALG) threads the bilayer. Positions 152–189 (TQKPQNSIDSINSKESSVDSLHSPSIVESTQSSSSKDS) are disordered. Polar residues predominate over residues 153 to 189 (QKPQNSIDSINSKESSVDSLHSPSIVESTQSSSSKDS).

This sequence belongs to the TatB family. As to quaternary structure, the Tat system comprises two distinct complexes: a TatABC complex, containing multiple copies of TatA, TatB and TatC subunits, and a separate TatA complex, containing only TatA subunits. Substrates initially bind to the TatABC complex, which probably triggers association of the separate TatA complex to form the active translocon.

The protein localises to the cell inner membrane. Part of the twin-arginine translocation (Tat) system that transports large folded proteins containing a characteristic twin-arginine motif in their signal peptide across membranes. Together with TatC, TatB is part of a receptor directly interacting with Tat signal peptides. TatB may form an oligomeric binding site that transiently accommodates folded Tat precursor proteins before their translocation. In Helicobacter hepaticus (strain ATCC 51449 / 3B1), this protein is Sec-independent protein translocase protein TatB.